The following is a 212-amino-acid chain: Prolactin (212 aa).

The signal sequence occupies residues 1-24 (MAHRETNGSKLFITVLCMVAACSA). 2 disulfides stabilise this stretch: Cys70-Cys185 and Cys202-Cys212.

It belongs to the somatotropin/prolactin family.

The protein localises to the secreted. This chain is Prolactin (prl), found in Sparus aurata (Gilthead sea bream).